A 207-amino-acid chain; its full sequence is Negative modulator of initiation of replication (207 aa).

Residues 43-54 are compositionally biased toward polar residues; sequence ATPITSSVTPSA. Positions 43–63 are disordered; that stretch reads ATPITSSVTPSAPRQEAVNDE.

The protein belongs to the SeqA family. As to quaternary structure, homodimer. Polymerizes to form helical filaments.

Its subcellular location is the cytoplasm. Functionally, negative regulator of replication initiation, which contributes to regulation of DNA replication and ensures that replication initiation occurs exactly once per chromosome per cell cycle. Binds to pairs of hemimethylated GATC sequences in the oriC region, thus preventing assembly of replication proteins and re-initiation at newly replicated origins. Repression is relieved when the region becomes fully methylated. In Psychromonas ingrahamii (strain DSM 17664 / CCUG 51855 / 37), this protein is Negative modulator of initiation of replication.